The chain runs to 425 residues: CinA-like protein (425 aa).

Belongs to the CinA family.

This Mycobacterium marinum (strain ATCC BAA-535 / M) protein is CinA-like protein.